A 642-amino-acid polypeptide reads, in one-letter code: Mini-chromosome maintenance complex-binding protein (642 aa).

Residues 151–161 (ARVSPSTSYTP) show a composition bias toward polar residues. The tract at residues 151 to 196 (ARVSPSTSYTPSRHKRSYEDDEDMDLQPSKQKEQHPGSRQAGGLGG) is disordered. At Ser154 the chain carries Phosphoserine. Thr160 is subject to Phosphothreonine. A phosphoserine mark is found at Ser167 and Ser298.

It belongs to the MCMBP family. In terms of assembly, interacts with the MCM complex: associates with the MCM3-7 complex which lacks MCM2, while it does not interact with the MCM complex when MCM2 is present (MCM2-7 complex). Interacts with the RPA complex, when composed of all RPA1, RPA2 and RPA3 components, but not with RPA1 or RPA2 alone.

Its subcellular location is the nucleus. Its function is as follows. Associated component of the MCM complex that acts as a regulator of DNA replication. Binds to the MCM complex during late S phase and promotes the disassembly of the MCM complex from chromatin, thereby acting as a key regulator of pre-replication complex (pre-RC) unloading from replicated DNA. Can dissociate the MCM complex without addition of ATP; probably acts by destabilizing interactions of each individual subunits of the MCM complex. Required for sister chromatid cohesion. This is Mini-chromosome maintenance complex-binding protein (Mcmbp) from Mus musculus (Mouse).